The sequence spans 356 residues: Phosphoribosylformylglycinamidine cyclo-ligase (356 aa).

It belongs to the AIR synthase family.

The protein localises to the cytoplasm. The enzyme catalyses 2-formamido-N(1)-(5-O-phospho-beta-D-ribosyl)acetamidine + ATP = 5-amino-1-(5-phospho-beta-D-ribosyl)imidazole + ADP + phosphate + H(+). It participates in purine metabolism; IMP biosynthesis via de novo pathway; 5-amino-1-(5-phospho-D-ribosyl)imidazole from N(2)-formyl-N(1)-(5-phospho-D-ribosyl)glycinamide: step 2/2. The protein is Phosphoribosylformylglycinamidine cyclo-ligase of Nitrobacter hamburgensis (strain DSM 10229 / NCIMB 13809 / X14).